A 515-amino-acid polypeptide reads, in one-letter code: Maturase K (515 aa).

It belongs to the intron maturase 2 family. MatK subfamily.

Its subcellular location is the plastid. It is found in the chloroplast. In terms of biological role, usually encoded in the trnK tRNA gene intron. Probably assists in splicing its own and other chloroplast group II introns. This Pinus luchuensis (Ryukyu island pine) protein is Maturase K.